The following is a 132-amino-acid chain: Ribosome-binding factor A (132 aa).

This sequence belongs to the RbfA family. Monomer. Binds 30S ribosomal subunits, but not 50S ribosomal subunits or 70S ribosomes.

The protein resides in the cytoplasm. In terms of biological role, one of several proteins that assist in the late maturation steps of the functional core of the 30S ribosomal subunit. Associates with free 30S ribosomal subunits (but not with 30S subunits that are part of 70S ribosomes or polysomes). Required for efficient processing of 16S rRNA. May interact with the 5'-terminal helix region of 16S rRNA. This chain is Ribosome-binding factor A, found in Pasteurella multocida (strain Pm70).